The sequence spans 473 residues: Glutamine synthetase (473 aa).

Residues 15–100 (ENIKIIDLKF…ICSIKEPRTG (86 aa)) enclose the GS beta-grasp domain. The GS catalytic domain maps to 107–473 (PRTIAAKAVE…PYEFSLYYDC (367 aa)). A Mn(2+)-binding site is contributed by Glu-132. Mg(2+) is bound at residue Glu-134. Glu-210 contacts ATP. 2 residues coordinate Mg(2+): Glu-215 and Glu-223. L-glutamate is bound by residues 267–268 (NG) and Gly-268. His-272 lines the Mg(2+) pocket. Residues 274 to 276 (HQS) and Ser-276 contribute to the ATP site. Arg-324, Glu-330, and Arg-342 together coordinate L-glutamate. Residues Arg-342, Arg-347, and Lys-356 each contribute to the ATP site. Glu-361 serves as a coordination point for Mn(2+). L-glutamate is bound at residue Arg-363. The residue at position 401 (Tyr-401) is an O-AMP-tyrosine.

The protein belongs to the glutamine synthetase family. Oligomer of 12 subunits arranged in the form of two hexagons. Requires Mg(2+) as cofactor.

The protein resides in the cytoplasm. The catalysed reaction is L-glutamate + NH4(+) + ATP = L-glutamine + ADP + phosphate + H(+). With respect to regulation, inhibited by ADP (90%), AMP (80%), alanine (52%) and aspartate (41%). The activity of this enzyme could be controlled by adenylation under conditions of abundant glutamine. Functionally, involved in nitrogen metabolism via ammonium assimilation. Catalyzes the ATP-dependent biosynthesis of glutamine from glutamate and ammonia. This is Glutamine synthetase from Synechocystis sp. (strain ATCC 27184 / PCC 6803 / Kazusa).